Here is a 263-residue protein sequence, read N- to C-terminus: 4-hydroxy-tetrahydrodipicolinate reductase (263 aa).

NAD(+)-binding positions include 7-12 (GASGRM) and aspartate 33. Position 34 (arginine 34) interacts with NADP(+). NAD(+) is bound by residues 96-98 (GTT) and 120-123 (APNM). Histidine 153 functions as the Proton donor/acceptor in the catalytic mechanism. Residue histidine 154 coordinates (S)-2,3,4,5-tetrahydrodipicolinate. The active-site Proton donor is the lysine 157. Residue 163–164 (GT) coordinates (S)-2,3,4,5-tetrahydrodipicolinate.

This sequence belongs to the DapB family.

The protein resides in the cytoplasm. It carries out the reaction (S)-2,3,4,5-tetrahydrodipicolinate + NAD(+) + H2O = (2S,4S)-4-hydroxy-2,3,4,5-tetrahydrodipicolinate + NADH + H(+). The catalysed reaction is (S)-2,3,4,5-tetrahydrodipicolinate + NADP(+) + H2O = (2S,4S)-4-hydroxy-2,3,4,5-tetrahydrodipicolinate + NADPH + H(+). Its pathway is amino-acid biosynthesis; L-lysine biosynthesis via DAP pathway; (S)-tetrahydrodipicolinate from L-aspartate: step 4/4. Catalyzes the conversion of 4-hydroxy-tetrahydrodipicolinate (HTPA) to tetrahydrodipicolinate. This chain is 4-hydroxy-tetrahydrodipicolinate reductase, found in Ralstonia nicotianae (strain ATCC BAA-1114 / GMI1000) (Ralstonia solanacearum).